We begin with the raw amino-acid sequence, 64 residues long: Large ribosomal subunit protein uL29 (64 aa).

The protein belongs to the universal ribosomal protein uL29 family.

The chain is Large ribosomal subunit protein uL29 from Cupriavidus metallidurans (strain ATCC 43123 / DSM 2839 / NBRC 102507 / CH34) (Ralstonia metallidurans).